The sequence spans 85 residues: Small ribosomal subunit protein bS16c (85 aa).

Belongs to the bacterial ribosomal protein bS16 family.

It is found in the plastid. The protein resides in the chloroplast. In Agrostis stolonifera (Creeping bentgrass), this protein is Small ribosomal subunit protein bS16c.